The following is a 188-amino-acid chain: Meiotically up-regulated gene 94 protein (188 aa).

Its subcellular location is the cytoplasm. The protein localises to the nucleus. Its function is as follows. Has a role in meiosis. This Schizosaccharomyces pombe (strain 972 / ATCC 24843) (Fission yeast) protein is Meiotically up-regulated gene 94 protein (mug94).